We begin with the raw amino-acid sequence, 2115 residues long: Nuclear mitotic apparatus protein 1 (2115 aa).

A head (Globular) region spans residues 1 to 212 (MTLHATRGAA…SPMGDILQTP (212 aa)). Position 162 is a phosphoserine (S162). Position 163 is a phosphothreonine (T163). S169 and S203 each carry phosphoserine. At T211 the chain carries Phosphothreonine. Positions 213–1699 (QFQMRRLKKQ…ADQQLRDLGK (1487 aa)) form a coiled coil. Position 271 is a phosphoserine (S271). At K379 the chain carries N6-acetyllysine. Phosphoserine occurs at positions 388 and 395. Positions 549–560 (LRHQVEQLSSSL) are enriched in low complexity. Disordered regions lie at residues 549–593 (LRHQ…EERE) and 746–766 (LVEQ…GRKG). Residues 561 to 581 (KQKEQQLKEVAEKQEATRQDH) show a composition bias toward basic and acidic residues. S820 is subject to Phosphoserine. K891 bears the N6-acetyllysine mark. Composition is skewed to basic and acidic residues over residues 926–950 (AGEQ…RQPE) and 996–1013 (QEER…TQER). Disordered regions lie at residues 926-958 (AGEQ…QQGR) and 988-1013 (LMES…TQER). T1047 carries the phosphothreonine; by PLK1 modification. Positions 1090-1102 (LKEQLAKKEKEHA) are enriched in basic and acidic residues. 2 disordered regions span residues 1090-1225 (LKEQ…RKNS) and 1275-1296 (ETAS…EVQS). Composition is skewed to low complexity over residues 1103 to 1112 (SGSGAQSEAA) and 1133 to 1142 (EQQCQKQQEQ). The segment covering 1145-1163 (SLERSLEAERASRAERDSA) has biased composition (basic and acidic residues). A Phosphoserine modification is found at S1187. Basic and acidic residues predominate over residues 1198–1224 (KVQDHSKAEDEWKAQVARGRQEAERKN). S1225 carries the phosphoserine modification. Residues 1283–1296 (AAERSSALREEVQS) show a composition bias toward basic and acidic residues. An N6-acetyllysine modification is found at K1511. S1601 bears the Phosphoserine mark. Residue K1699 forms a Glycyl lysine isopeptide (Lys-Gly) (interchain with G-Cter in SUMO2) linkage. The segment at 1699–1876 (KFQVATDALK…NSALLSLPGY (178 aa)) is membrane-binding domain 1. The tail (Globular) stretch occupies residues 1700 to 2115 (FQVATDALKS…TPRAKGKAKH (416 aa)). A phosphoserine mark is found at S1721, S1724, and S1728. Residues 1734-1761 (PLSITSKLPRTQPDGTSVPGEPASPISQ) are disordered. The span at 1735–1748 (LSITSKLPRTQPDG) shows a compositional bias: polar residues. The Tankyrase-binding domain motif lies at 1742–1748 (PRTQPDG). Phosphoserine is present on residues S1757 and S1760. K1766 participates in a covalent cross-link: Glycyl lysine isopeptide (Lys-Gly) (interchain with G-Cter in SUMO1); alternate. K1766 participates in a covalent cross-link: Glycyl lysine isopeptide (Lys-Gly) (interchain with G-Cter in SUMO2); alternate. Phosphoserine; by PLK1 is present on residues S1769 and S1772. Y1774 is modified (phosphotyrosine). Residue T1776 is modified to Phosphothreonine. The residue at position 1788 (S1788) is a Phosphoserine. Positions 1788-1810 (SSLDSLGDVFLDSGRKTRSARRR) are 4.1-binding domain. Residue S1789 is modified to Phosphoserine; by PLK1. A phosphoserine mark is found at S1792 and S1800. Phosphothreonine is present on T1804. Residue K1822 forms a Glycyl lysine isopeptide (Lys-Gly) (interchain with G-Cter in SUMO2) linkage. Disordered regions lie at residues 1826–1901 (EEPD…GRNS) and 1955–2115 (EMKT…KAKH). S1830 and S1833 each carry phosphoserine. A compositionally biased stretch (polar residues) spans 1830-1857 (SANSSFYSTRSAPASQASLRATSSTQSL). S1834 is modified (phosphoserine; by PLK1). Phosphotyrosine is present on Y1836. Phosphoserine is present on S1840. S1844 is modified (phosphoserine; alternate). O-linked (GlcNAc) serine; alternate glycosylation is present at S1844. Phosphoserine is present on residues S1862 and S1887. The segment covering 1879–1891 (TTRSSARRSQAGV) has biased composition (polar residues). The segment at 1882–1985 (SSARRSQAGV…AEGTGITTRQ (104 aa)) is tubulin-binding domain. Residues 1892 to 1926 (SSGAPPGRNSFYMGTCQDEPEQLDDWNRIAELQQR) form a GPSM2-binding domain region. Positions 1955–1966 (EMKTGDPQETLR) are enriched in basic and acidic residues. The residue at position 1969 (S1969) is a Phosphoserine. A membrane-binding domain 2 region spans residues 1981–2060 (ITTRQQRKRV…SILNTPKKLG (80 aa)). The short motif at 1984–1989 (RQQRKR) is the Nuclear localization signal element. Position 1991 is a phosphoserine (S1991). T2000 carries the post-translational modification Phosphothreonine. At S2003 the chain carries Phosphoserine. A Phosphothreonine; by CDK1 modification is found at T2015. The span at 2015–2032 (TPRDRHEGRKQSTTEAQK) shows a compositional bias: basic and acidic residues. S2047 is modified (phosphoserine). Phosphothreonine; by CDK1 is present on T2055. 2 positions are modified to phosphoserine: S2062 and S2077. Residue S2087 is modified to Phosphoserine; by CDK1. Residues 2089–2108 (RIATTTASAATAAAIGATPR) are compositionally biased toward low complexity. Position 2106 is a phosphothreonine; by CDK1 (T2106).

In terms of assembly, homodimer. Also forms multiarm oligomers by association of C-terminal tail domains, oligomers may further assemble to form a hexagonal nuclear lattice-like network. Associates with the dynein-dynactin complex; this association promotes the transport and accumulation of NUMA1 at the mitotic spindle poles that is inhibited by the BRISC complex in a PLK1-dependent manner. Part of a spindle orientation complex at least composed of GNAI1, GPSM2 and NUMA1. Interacts (via C-terminus) with microtubules (MTs); this interaction is direct and promotes both MT bundle formation and stability in a dynein-dynactin complex- and CDK1-independent manner. Interacts with EPB41 and EPB41L2; these interactions are negatively regulated by CDK1 during metaphase and are important for anaphase-specific localization of NUMA1 in symmetrically dividing cells. Interacts (via C-terminus) with GPSM2 (via TPR repeats); this interaction is direct, prevented by competitive binding of INSC, is inhibited in a PLK1-dependent manner, blocks the association of NUMA1 with MTs and inhibits NUMA1-induced MT bundle formation, prevents the association of NUMA1 with SPAG5, induces mitotic spindle pole localization of GPSM2, both metaphase cell cortex localization of NUMA1 and mitotic spindle organization. Does not interact with GPSM2 during anaphase. Interacts (via C-terminus) with the nuclear importin alpha/importin beta receptor; this interaction is inhibited by RanGTP. Interacts (via C-terminus) with KPNB1; this interaction is inhibited by RanGTP and the BRISC complex. Interacts with ABRAXAS2 and the BRISC complex; these interactions regulate mitotic spindle assembly. Interacts (via N-terminal end of the coiled-coil domain) with RAE1; this interaction promotes mitotic spindle formation. Interacts (via C-terminus) with SPAG5 (via C-terminus); this interaction promotes the recruitment of SPAG5 to the MTs at spindle poles in a dynein-dynactin-dependent manner and regulates mitotic spindle organization and proper chromosome alignment during mitosis. Interacts with TNKS; this interaction occurs at the onset of mitosis. Interacts with TNKS2. Interacts with tubulin. Interacts with KHDC3L (via C-terminus). In terms of processing, phosphorylation and dephosphorylation on Thr-2055 regulates the extent of cortical NUMA1 and the dynein-dynactin complex localization during mitotic metaphase and anaphase. In metaphase, phosphorylation on Thr-2055 occurs in a kinase CDK1-dependent manner; this phosphorylation maintains low levels of cortical dynein-dynactin complex at metaphase, and hence proper spindle positioning. In anaphase, dephosphorylated on Thr-2055 by phosphatase PPP2CA; this dephosphorylation stimulates its membrane association and with the dynein-dynactin complex its enrichment at the cell cortex, and hence robust spindle elongation. Probably also phosphorylated on Thr-2015 and Ser-2087 by CDK1; these phosphorylations may regulate its cell cortex recruitment during metaphase and anaphase. Phosphorylated on Thr-1047, Ser-1769, Ser-1772, Ser-1789 and Ser-1834 by PLK1; these phosphorylations induce cortical dynein-dynactin complex dissociation from the NUMA1-GPSM2 complex and negatively regulates cortical dynein-dynactin complex localization. Post-translationally, ADP-ribosylated by TNKS at the onset of mitosis; ADP-ribosylation is not required for its localization to spindle poles. O-glycosylated during cytokinesis at sites identical or close to phosphorylation sites, this interferes with the phosphorylation status. In terms of processing, ubiquitinated with 'Lys-63'-linked polyubiquitin chains. Deubiquitination by the BRISC complex is important for the incorporation of NUMA1 into mitotic spindle poles and normal spindle pole function, probably by modulating interactions between NUMA1, dynein-dynactin complex and importin-beta.

It is found in the nucleus. It localises to the nucleoplasm. Its subcellular location is the nucleus matrix. The protein localises to the chromosome. The protein resides in the cytoplasm. It is found in the cytoskeleton. It localises to the microtubule organizing center. Its subcellular location is the centrosome. The protein localises to the spindle pole. The protein resides in the cell cortex. It is found in the cell membrane. It localises to the lateral cell membrane. Its subcellular location is the cytosol. In terms of biological role, microtubule (MT)-binding protein that plays a role in the formation and maintenance of the spindle poles and the alignement and the segregation of chromosomes during mitotic cell division. Functions to tether the minus ends of MTs at the spindle poles, which is critical for the establishment and maintenance of the spindle poles. Plays a role in the establishment of the mitotic spindle orientation during metaphase and elongation during anaphase in a dynein-dynactin-dependent manner. In metaphase, part of a ternary complex composed of GPSM2 and G(i) alpha proteins, that regulates the recruitment and anchorage of the dynein-dynactin complex in the mitotic cell cortex regions situated above the two spindle poles, and hence regulates the correct oritentation of the mitotic spindle. During anaphase, mediates the recruitment and accumulation of the dynein-dynactin complex at the cell membrane of the polar cortical region through direct association with phosphatidylinositol 4,5-bisphosphate (PI(4,5)P2), and hence participates in the regulation of the spindle elongation and chromosome segregation. Also binds to other polyanionic phosphoinositides, such as phosphatidylinositol 3-phosphate (PIP), lysophosphatidic acid (LPA) and phosphatidylinositol triphosphate (PIP3), in vitro. Also required for proper orientation of the mitotic spindle during asymmetric cell divisions. Plays a role in mitotic MT aster assembly. Involved in anastral spindle assembly. Positively regulates TNKS protein localization to spindle poles in mitosis. Highly abundant component of the nuclear matrix where it may serve a non-mitotic structural role, occupies the majority of the nuclear volume. Required for epidermal differentiation and hair follicle morphogenesis. The chain is Nuclear mitotic apparatus protein 1 from Homo sapiens (Human).